Consider the following 371-residue polypeptide: MEEYYMNTAIELARRGEGQTQPNPLVGAVVVKKRQIVGMGAHLQYGEAHAEVHAINMAGSLAKGADLYVTLEPCSHYGKTPPCAELIMKSGIKRVFIAVEDPNPLVAGKGITMLEEAGIEVKTGLLRQQAEELNKMFLHFMRTGLPYVTLKAAASLDGKTATETGDSKWITSEAARLDAQQYRKSHQRILVGAGTVKADNPSLTCRLPDAVKQPVRVILDTKLTVPETANVLTDGAAPTWIFTAAGSDVRKKDRLTALGIKVFTLETDRIHIPEVLSILAENGIMSVYVEGGASVHGSFVKAGCFDELHFYFAPILIGGTLAPSLISGEGFQSMKDVPHLQFTQITQIGPDIKLTAIPKDGKDGDDVYRNR.

The 122-residue stretch at 1-122 folds into the CMP/dCMP-type deaminase domain; that stretch reads MEEYYMNTAI…MLEEAGIEVK (122 aa). Residues 1 to 144 form a deaminase region; it reads MEEYYMNTAI…KMFLHFMRTG (144 aa). His-49 contacts Zn(2+). The Proton donor role is filled by Glu-51. Positions 74 and 83 each coordinate Zn(2+). The segment at 145 to 371 is reductase; the sequence is LPYVTLKAAA…KDGDDVYRNR (227 aa). Ala-153 contributes to the NADP(+) binding site. Position 167 (Ser-167) interacts with substrate. Trp-169 provides a ligand contact to NADP(+). Arg-183 is a binding site for substrate. NADP(+) is bound by residues Thr-195 and Asp-199. Positions 203 and 206 each coordinate substrate. An NADP(+)-binding site is contributed by Thr-221. Glu-290 contacts substrate. NADP(+) is bound at residue 292-298; sequence GASVHGS.

This sequence in the N-terminal section; belongs to the cytidine and deoxycytidylate deaminase family. The protein in the C-terminal section; belongs to the HTP reductase family. The cofactor is Zn(2+).

The catalysed reaction is 2,5-diamino-6-hydroxy-4-(5-phosphoribosylamino)-pyrimidine + H2O + H(+) = 5-amino-6-(5-phospho-D-ribosylamino)uracil + NH4(+). The enzyme catalyses 5-amino-6-(5-phospho-D-ribitylamino)uracil + NADP(+) = 5-amino-6-(5-phospho-D-ribosylamino)uracil + NADPH + H(+). Its pathway is cofactor biosynthesis; riboflavin biosynthesis; 5-amino-6-(D-ribitylamino)uracil from GTP: step 2/4. It participates in cofactor biosynthesis; riboflavin biosynthesis; 5-amino-6-(D-ribitylamino)uracil from GTP: step 3/4. In terms of biological role, converts 2,5-diamino-6-(ribosylamino)-4(3h)-pyrimidinone 5'-phosphate into 5-amino-6-(ribosylamino)-2,4(1h,3h)-pyrimidinedione 5'-phosphate. The polypeptide is Riboflavin biosynthesis protein RibD (ribD) (Bacillus amyloliquefaciens (Bacillus velezensis)).